A 358-amino-acid chain; its full sequence is Putative hydrogenase expression/formation protein MJ0993 (358 aa).

Fe cation is bound by residues Cys-33, Cys-61, and Cys-64.

Belongs to the HypD family.

This is Putative hydrogenase expression/formation protein MJ0993 from Methanocaldococcus jannaschii (strain ATCC 43067 / DSM 2661 / JAL-1 / JCM 10045 / NBRC 100440) (Methanococcus jannaschii).